The primary structure comprises 374 residues: Putative G-protein coupled receptor-like protein B0244.6 (374 aa).

The Extracellular segment spans residues 1–54 (MTQNHYTTSIFANCSKHYEFEILLETCTNSTNPCHAVSQIQSAITIAYVDYYTS). A helical transmembrane segment spans residues 55-75 (VALFSIAALLDIYCLIITIPL). Over 76–86 (YRRMKDDSKKK) the chain is Cytoplasmic. A helical transmembrane segment spans residues 87–107 (YVFLITRCISGLLLVVAWLLI). Over 108–137 (QCIYLRFIAPSQDNLPYYVLALALNIGSTY) the chain is Extracellular. A helical membrane pass occupies residues 138 to 158 (VLLGSYVGMAGILYLGVLNPI). Over 159–169 (AFNQHLTLRIV) the chain is Cytoplasmic. The helical transmembrane segment at 170–190 (YIAVCIIFVISIFISIPLAIF) threads the bilayer. The Extracellular portion of the chain corresponds to 191-216 (QALMTVPTSSMSCTDTACAPLITLIN). A helical membrane pass occupies residues 217–237 (FVLVFGSLITTTLTLTFVLIS). The Cytoplasmic portion of the chain corresponds to 238-262 (LCRHRKEFKKLDTTSNTSLNSAVRL). A helical transmembrane segment spans residues 263–283 (LKFTLFAVLLLVAAEVIPFVI). The Extracellular segment spans residues 284 to 304 (SETKKKHSVVTGCYYFYHSGK). The helical transmembrane segment at 305–325 (VIQYAVFALTESSIWSIALII) threads the bilayer. Residues 326–374 (DPLINIIFDRTVSKKATDQVKWMRKSCVGLVRKVTKRSNPENFTETSEI) are Cytoplasmic-facing.

This sequence belongs to the G-protein coupled receptor 1 family. B0244 subfamily.

The protein localises to the cell membrane. The polypeptide is Putative G-protein coupled receptor-like protein B0244.6 (Caenorhabditis elegans).